A 305-amino-acid polypeptide reads, in one-letter code: Pseudouridine-5'-phosphate glycosidase (305 aa).

Glu-28 serves as the catalytic Proton donor. Substrate contacts are provided by Lys-89 and Val-109. A Mn(2+)-binding site is contributed by Asp-141. A substrate-binding site is contributed by 143 to 145 (SAD). Residue Lys-162 is the Nucleophile of the active site.

Belongs to the pseudouridine-5'-phosphate glycosidase family. Homotrimer. It depends on Mn(2+) as a cofactor.

The catalysed reaction is D-ribose 5-phosphate + uracil = psi-UMP + H2O. Its function is as follows. Catalyzes the reversible cleavage of pseudouridine 5'-phosphate (PsiMP) to ribose 5-phosphate and uracil. Functions biologically in the cleavage direction, as part of a pseudouridine degradation pathway. This chain is Pseudouridine-5'-phosphate glycosidase, found in Dinoroseobacter shibae (strain DSM 16493 / NCIMB 14021 / DFL 12).